A 216-amino-acid chain; its full sequence is ATP phosphoribosyltransferase (216 aa).

The protein belongs to the ATP phosphoribosyltransferase family. Short subfamily. As to quaternary structure, heteromultimer composed of HisG and HisZ subunits.

The protein localises to the cytoplasm. It catalyses the reaction 1-(5-phospho-beta-D-ribosyl)-ATP + diphosphate = 5-phospho-alpha-D-ribose 1-diphosphate + ATP. It participates in amino-acid biosynthesis; L-histidine biosynthesis; L-histidine from 5-phospho-alpha-D-ribose 1-diphosphate: step 1/9. Catalyzes the condensation of ATP and 5-phosphoribose 1-diphosphate to form N'-(5'-phosphoribosyl)-ATP (PR-ATP). Has a crucial role in the pathway because the rate of histidine biosynthesis seems to be controlled primarily by regulation of HisG enzymatic activity. The protein is ATP phosphoribosyltransferase of Streptococcus thermophilus (strain ATCC BAA-491 / LMD-9).